Reading from the N-terminus, the 717-residue chain is Cleavage stimulation factor subunit 3 (717 aa).

At Ser2 the chain carries N-acetylserine. HAT repeat units lie at residues 45-77 (QPID…AEIK), 79-110 (KNYD…YVRE), 117-152 (SYKE…FLKG), 163-196 (QRIT…YEEG), 221-261 (KEYE…WEKS), 271-303 (LITK…YLEQ), 319-352 (LFSD…YEES), 354-387 (MKYE…FARR), and 458-494 (NEDN…FESN). Residues 684–705 (VKRPNEDSDEDEEKGAVVPPVH) are disordered. Ser691 bears the Phosphoserine mark.

In terms of assembly, homodimer. The CSTF complex is composed of CSTF1 (50 kDa subunit), CSTF2 (64 kDa subunit) and CSTF3 (77 kDa subunit). CSTF3 directly interacts with CSTF1 and CSTF2. Interacts with FIP1L1.

The protein localises to the nucleus. In terms of biological role, one of the multiple factors required for polyadenylation and 3'-end cleavage of mammalian pre-mRNAs. This chain is Cleavage stimulation factor subunit 3 (CSTF3), found in Homo sapiens (Human).